The sequence spans 255 residues: Ornithine decarboxylase antizyme (255 aa).

The protein belongs to the ODC antizyme family. In terms of assembly, interacts with ODC and thereby sterically blocks ODC homodimerization.

Ornithine decarboxylase (ODC) antizyme protein that negatively regulates ODC activity and intracellular polyamine biosynthesis in response to increased intracellular polyamine levels. Binds to ODC monomers, inhibiting the assembly of the functional ODC homodimer, and targets the monomers for ubiquitin-independent proteolytic destruction by the 26S proteasome. This chain is Ornithine decarboxylase antizyme (OAZ1), found in Candida glabrata (strain ATCC 2001 / BCRC 20586 / JCM 3761 / NBRC 0622 / NRRL Y-65 / CBS 138) (Yeast).